Here is a 406-residue protein sequence, read N- to C-terminus: CMP-sialic acid transporter 2 (406 aa).

Residues 1-41 are Cytoplasmic-facing; the sequence is MKNGMAECSVCRSRLVSPSSKAISRAYDNYNYKIRVSSKQR. Residues 42 to 62 form a helical membrane-spanning segment; the sequence is ALNVFLVVGDCMLVGLQPVLV. Residues 63–75 are Lumenal-facing; the sequence is YMSKVDGKFNFSP. A helical membrane pass occupies residues 76 to 96; sequence ISVNFLTEIAKVIFAMVMLLF. Residues 97-148 lie on the Cytoplasmic side of the membrane; the sequence is QARHQKVGEKPLLSLSTFVQAARNNMLLAVPAGLYAINNYLKFTMQLYFNPA. Residues 149–169 traverse the membrane as a helical segment; sequence TVKMLSNLKVLVIAVLLKMIM. The Lumenal segment spans residues 170–172; sequence KRR. The helical transmembrane segment at 173–193 threads the bilayer; sequence FSIIQWEALALLLIGISINQL. Residues 194 to 201 lie on the Cytoplasmic side of the membrane; the sequence is RSLPEGAT. A helical membrane pass occupies residues 202 to 222; that stretch reads TVAVPIATGAYICTFIFVTVP. The Lumenal portion of the chain corresponds to 223 to 245; it reads SLASVYNEYALKSQYDTSIYLQN. Residues 246–266 form a helical membrane-spanning segment; sequence LFLYGYGAIFNFLGILGTVIY. Residues 267 to 282 lie on the Cytoplasmic side of the membrane; that stretch reads KGPGSFDILQGHSRAT. A helical membrane pass occupies residues 283–303; it reads MFLILNNAAQGILSSFFFKYA. Residues 304–323 are Lumenal-facing; that stretch reads DTILKKYSSTVATIFTGIAS. A helical membrane pass occupies residues 324–344; the sequence is AALFGHILTMNFLLGISIVFI. Topologically, residues 345 to 406 are cytoplasmic; sequence SMHQFFSPLS…SDDRVPLLPR (62 aa).

This sequence belongs to the nucleotide-sugar transporter family. CMP-Sialate:CMP antiporter (TC 2.A.7.12) subfamily.

It localises to the golgi apparatus membrane. Functionally, sugar transporter involved in the transport of CMP-sialic acid from the cytoplasm into the Golgi. The protein is CMP-sialic acid transporter 2 of Arabidopsis thaliana (Mouse-ear cress).